A 1009-amino-acid chain; its full sequence is Probable beta-galactosidase B (1009 aa).

The first 27 residues, 1–27 (MKTIAGLSWISALSSLASLPNGLGVSA), serve as a signal peptide directing secretion. Position 96 (Tyr-96) interacts with substrate. An N-linked (GlcNAc...) asparagine glycan is attached at Asn-106. 4 residues coordinate substrate: Asn-141, Ala-142, Glu-143, and Asn-201. Glu-202 (proton donor) is an active-site residue. Tyr-271 lines the substrate pocket. A disulfide bond links Cys-277 and Cys-330. Residue Glu-314 is the Nucleophile of the active site. Tyr-379 lines the substrate pocket. 12 N-linked (GlcNAc...) asparagine glycosylation sites follow: Asn-467, Asn-495, Asn-547, Asn-593, Asn-632, Asn-672, Asn-707, Asn-775, Asn-782, Asn-789, Asn-795, and Asn-914.

It belongs to the glycosyl hydrolase 35 family.

It is found in the secreted. The catalysed reaction is Hydrolysis of terminal non-reducing beta-D-galactose residues in beta-D-galactosides.. Cleaves beta-linked terminal galactosyl residues from gangliosides, glycoproteins, and glycosaminoglycans. The polypeptide is Probable beta-galactosidase B (lacB) (Pyrenophora tritici-repentis (strain Pt-1C-BFP) (Wheat tan spot fungus)).